A 134-amino-acid polypeptide reads, in one-letter code: ATP synthase epsilon chain (134 aa).

This sequence belongs to the ATPase epsilon chain family. In terms of assembly, F-type ATPases have 2 components, CF(1) - the catalytic core - and CF(0) - the membrane proton channel. CF(1) has five subunits: alpha(3), beta(3), gamma(1), delta(1), epsilon(1). CF(0) has three main subunits: a, b and c.

It is found in the cell inner membrane. Functionally, produces ATP from ADP in the presence of a proton gradient across the membrane. The protein is ATP synthase epsilon chain of Solibacter usitatus (strain Ellin6076).